Reading from the N-terminus, the 629-residue chain is mRNA cleavage and polyadenylation factor CLP1 (629 aa).

ATP is bound by residues Glu-21 and Lys-72. Residues 142–166 are disordered; the sequence is YIAPRTTDPNTETESDPSGTAAATV. Over residues 148–159 the composition is skewed to polar residues; sequence TDPNTETESDPS. Residue 183-188 coordinates ATP; the sequence is SAGKTS. The segment at 562-582 is disordered; the sequence is PPRGGGGAGQPDSSTNPTDDE.

The protein belongs to the Clp1 family. Clp1 subfamily. As to quaternary structure, component of a pre-mRNA cleavage factor complex. Interacts directly with PCF11.

It is found in the nucleus. In terms of biological role, required for endonucleolytic cleavage during polyadenylation-dependent pre-mRNA 3'-end formation. This chain is mRNA cleavage and polyadenylation factor CLP1, found in Mycosarcoma maydis (Corn smut fungus).